The chain runs to 251 residues: DNA repair protein RecO (251 aa).

Belongs to the RecO family.

Its function is as follows. Involved in DNA repair and RecF pathway recombination. This is DNA repair protein RecO from Albidiferax ferrireducens (strain ATCC BAA-621 / DSM 15236 / T118) (Rhodoferax ferrireducens).